Consider the following 414-residue polypeptide: Isocitrate dehydrogenase [NADP] cytoplasmic (414 aa).

The residue at position 2 (serine 2) is an N-acetylserine. Tyrosine 42 carries the phosphotyrosine modification. 75-77 provides a ligand contact to NADP(+); that stretch reads TIT. Threonine 77 is a binding site for substrate. Lysine 81 carries the post-translational modification N6-acetyllysine. Arginine 82 serves as a coordination point for NADP(+). Substrate contacts are provided by residues 94–100 and arginine 109; that span reads SPNGTIR. Lysine 126 carries the post-translational modification N6-succinyllysine. Substrate is bound by residues arginine 132 and lysine 212. 3 positions are modified to N6-acetyllysine: lysine 224, lysine 233, and lysine 243. Aspartate 252 contributes to the Mn(2+) binding site. Lysine 260 contributes to the NADP(+) binding site. The Mn(2+) site is built by aspartate 275 and aspartate 279. 310-315 serves as a coordination point for NADP(+); sequence GTVTRH. Lysine 321 is modified (N6-acetyllysine). Asparagine 328 contacts NADP(+). A Phosphoserine modification is found at serine 389. An N6-succinyllysine modification is found at lysine 400.

The protein belongs to the isocitrate and isopropylmalate dehydrogenases family. As to quaternary structure, homodimer. Requires Mg(2+) as cofactor. It depends on Mn(2+) as a cofactor. In terms of processing, the N-terminus is blocked. Post-translationally, acetylation at Lys-374 dramatically reduces catalytic activity. In terms of tissue distribution, ubiquitous.

The protein resides in the cytoplasm. The protein localises to the cytosol. Its subcellular location is the peroxisome. The enzyme catalyses D-threo-isocitrate + NADP(+) = 2-oxoglutarate + CO2 + NADPH. Functionally, catalyzes the NADP(+)-dependent oxidative decarboxylation of isocitrate (D-threo-isocitrate) to 2-ketoglutarate (2-oxoglutarate), which is required by other enzymes such as the phytanoyl-CoA dioxygenase. Plays a critical role in the generation of NADPH, an important cofactor in many biosynthesis pathways. May act as a corneal epithelial crystallin and may be involved in maintaining corneal epithelial transparency. The protein is Isocitrate dehydrogenase [NADP] cytoplasmic (Idh1) of Rattus norvegicus (Rat).